The following is a 146-amino-acid chain: Large ribosomal subunit protein uL15 (146 aa).

A disordered region spans residues 1–54; that stretch reads MKLHELKPAAGSKKAPKRIGRGTGSGLGRNAGKGEKGQNARSGGGVRPGFEGGQ. Gly residues-rich tracts occupy residues 21–31 and 42–52; these read RGTGSGLGRNA and SGGGVRPGFEG.

The protein belongs to the universal ribosomal protein uL15 family. Part of the 50S ribosomal subunit.

Functionally, binds to the 23S rRNA. The polypeptide is Large ribosomal subunit protein uL15 (Clostridium beijerinckii (strain ATCC 51743 / NCIMB 8052) (Clostridium acetobutylicum)).